An 82-amino-acid chain; its full sequence is Sec-independent protein translocase protein TatA (82 aa).

The chain crosses the membrane as a helical span at residues 1–21 (MLGFGPFELILIVVIIALLFG). The segment covering 36–47 (IKEFKQEMHEPS) has biased composition (basic and acidic residues). The segment at 36 to 82 (IKEFKQEMHEPSPPRPQVTDIPSQRLDPVTGAPVSTESTVPASDRRS) is disordered.

It belongs to the TatA/E family. In terms of assembly, forms a complex with TatC.

Its subcellular location is the cell membrane. Part of the twin-arginine translocation (Tat) system that transports large folded proteins containing a characteristic twin-arginine motif in their signal peptide across membranes. TatA could form the protein-conducting channel of the Tat system. The protein is Sec-independent protein translocase protein TatA of Deinococcus deserti (strain DSM 17065 / CIP 109153 / LMG 22923 / VCD115).